The chain runs to 304 residues: Light-independent protochlorophyllide reductase iron-sulfur ATP-binding protein (304 aa).

ATP contacts are provided by residues 46 to 51 (GIGKST) and K75. S50 contributes to the Mg(2+) binding site. Residues C131 and C165 each contribute to the [4Fe-4S] cluster site. ATP-binding positions include 216–217 (NR) and 240–242 (PDL).

The protein belongs to the NifH/BchL/ChlL family. In terms of assembly, homodimer. Protochlorophyllide reductase is composed of three subunits; BchL, BchN and BchB. [4Fe-4S] cluster is required as a cofactor.

The enzyme catalyses chlorophyllide a + oxidized 2[4Fe-4S]-[ferredoxin] + 2 ADP + 2 phosphate = protochlorophyllide a + reduced 2[4Fe-4S]-[ferredoxin] + 2 ATP + 2 H2O. It participates in porphyrin-containing compound metabolism; bacteriochlorophyll biosynthesis (light-independent). Its function is as follows. Component of the dark-operative protochlorophyllide reductase (DPOR) that uses Mg-ATP and reduced ferredoxin to reduce ring D of protochlorophyllide (Pchlide) to form chlorophyllide a (Chlide). This reaction is light-independent. The L component serves as a unique electron donor to the NB-component of the complex, and binds Mg-ATP. In Rhodobacter capsulatus (strain ATCC BAA-309 / NBRC 16581 / SB1003), this protein is Light-independent protochlorophyllide reductase iron-sulfur ATP-binding protein.